We begin with the raw amino-acid sequence, 76 residues long: Omega-conotoxin-like TxMKLT1-0211 (76 aa).

Positions 1-22 (MKLTCMMIVAVLFLTAWTFVTA) are cleaved as a signal peptide. The propeptide occupies 23–52 (VPHSSNALENLYLKAHHEMNNPEDSELNKR). 3 disulfides stabilise this stretch: C53-C67, C60-C71, and C66-C75.

It belongs to the conotoxin O1 superfamily. Expressed by the venom duct.

The protein resides in the secreted. In terms of biological role, omega-conotoxins act at presynaptic membranes, they bind and block voltage-gated calcium channels (Cav). This is Omega-conotoxin-like TxMKLT1-0211 from Conus textile (Cloth-of-gold cone).